Reading from the N-terminus, the 369-residue chain is MKSRAAVAFEVGKPLQIVEIDVAPPQQGEVLVKITHTGVCHTDAFTLSGDDPEGLFPVVLGHEGAGIVVEVGEGVTSVQLGDHVIPLYTAECGKCLFCRSGKTNLCVAVRATQGKGVMPDGTSRFSYNGQSLYHYMGCSTFSEYTVVAEVSLAKINPEANHEHVCLLGCGVTTGIGAVHNTAKVQPGDSVAVFGLGGIGLAVVQGARQAKAGRIIAIDTNPAKFELAKQMGATDCINPKDHDQPIQQVIVEMTGWGVDHSFECIGNVEVMRSALECAHRGWGQSVIIGVAGAGQEISTRPFQLVTGRKWMGTAFGGVKGRSQLPGMVEQSMRGEIQLAPFVTHTMELKDINQAFDLMHDGKSIRSVIHY.

Residues Cys-40, His-62, Cys-92, Cys-95, Cys-98, Cys-106, and Cys-169 each coordinate Zn(2+).

The protein belongs to the zinc-containing alcohol dehydrogenase family. Class-III subfamily. As to quaternary structure, homodimer. It depends on Zn(2+) as a cofactor.

The protein resides in the cytoplasm. It carries out the reaction S-(hydroxymethyl)glutathione + NADP(+) = S-formylglutathione + NADPH + H(+). It catalyses the reaction S-(hydroxymethyl)glutathione + NAD(+) = S-formylglutathione + NADH + H(+). The enzyme catalyses a primary alcohol + NAD(+) = an aldehyde + NADH + H(+). The catalysed reaction is a secondary alcohol + NAD(+) = a ketone + NADH + H(+). It carries out the reaction S-nitrosoglutathione + NADH + H(+) = S-(hydroxysulfenamide)glutathione + NAD(+). Its function is as follows. Has high formaldehyde dehydrogenase activity in the presence of glutathione and catalyzes the oxidation of normal alcohols in a reaction that is not GSH-dependent. In addition, hemithiolacetals other than those formed from GSH, including omega-thiol fatty acids, also are substrates. Also acts as a S-nitroso-glutathione reductase by catalyzing the NADH-dependent reduction of S-nitrosoglutathione. This chain is S-(hydroxymethyl)glutathione dehydrogenase (frmA), found in Synechocystis sp. (strain ATCC 27184 / PCC 6803 / Kazusa).